Reading from the N-terminus, the 137-residue chain is ATP synthase epsilon chain, chloroplastic (137 aa).

It belongs to the ATPase epsilon chain family. As to quaternary structure, F-type ATPases have 2 components, CF(1) - the catalytic core - and CF(0) - the membrane proton channel. CF(1) has five subunits: alpha(3), beta(3), gamma(1), delta(1), epsilon(1). CF(0) has three main subunits: a, b and c.

Its subcellular location is the plastid. The protein localises to the chloroplast thylakoid membrane. Produces ATP from ADP in the presence of a proton gradient across the membrane. The sequence is that of ATP synthase epsilon chain, chloroplastic from Medicago sativa (Alfalfa).